A 60-amino-acid polypeptide reads, in one-letter code: Putative SERF-like protein (60 aa).

Basic and acidic residues predominate over residues 1 to 53 (MTRGNQRDLARQKNQKKQADLTKGKRTDNLTVEQRKARDAELMREKQKKKEEA). Residues 1 to 60 (MTRGNQRDLARQKNQKKQADLTKGKRTDNLTVEQRKARDAELMREKQKKKEEAAAAGTSK) are disordered.

The protein belongs to the SERF family.

This is Putative SERF-like protein from Drosophila melanogaster (Fruit fly).